The chain runs to 175 residues: MTMCSGARLALLVYGIIMHSSVSCSPAAGLSFPGIRPEDEAYDQDGNPLQDFYDWDPPGVGSPASALRDAYALYYPADRRDVAHEILNEAYRKVLDQLSARKYLQSVVARGAGENLGGSAVDDPAPLTKRHSDGIFTDSYSRYRKQMAVKKYLAAVLGKRYKQRVKNKGRRIAYL.

The first 24 residues, 1–24 (MTMCSGARLALLVYGIIMHSSVSC), serve as a signal peptide directing secretion. A propeptide spanning residues 25–78 (SPAAGLSFPGIRPEDEAYDQDGNPLQDFYDWDPPGVGSPASALRDAYALYYPAD) is cleaved from the precursor. The tract at residues 149-157 (VKKYLAAVL) is important for receptor binding. A Leucine amide modification is found at leucine 157. Lysine 168 is subject to Lysine amide. A propeptide spanning residues 172–175 (IAYL) is cleaved from the precursor.

Belongs to the glucagon family.

It localises to the secreted. PACAP is a neuropeptide involved in diverse array of physiological processes through activating the PACAP subfamily of class B1 G protein-coupled receptors: VIP receptor 1 (VIPR1), VIP receptor 2 (VIPR2), and PACAP type I receptor (ADCYAP1R1). Exerts neuroprotective and general cytoprotective effects due to anti-apoptotic, anti-inflammatory, and antioxidant actions. Promotes neuron projection development through the RAPGEF2/Rap1/B-Raf/ERK pathway. In chromaffin cells, induces long-lasting increase of intracellular calcium concentrations and neuroendocrine secretion. Involved in the control of glucose homeostasis, induces insulin secretion by pancreatic beta cells. PACAP exists in two bioactive forms from proteolysis of the same precursor protein, PACAP27 and PACAP38, which differ by eleven amino acid residues in the C-terminus. This Mus musculus (Mouse) protein is Pituitary adenylate cyclase-activating polypeptide.